The chain runs to 508 residues: Photosystem II CP47 reaction center protein (508 aa).

Helical transmembrane passes span 21 to 36, 101 to 115, 140 to 156, 203 to 218, 237 to 252, and 457 to 472; these read SVHI…WAGS, IVFS…IWHW, GIHL…FGAF, IAAG…FHLS, VLSS…AFVV, and SFAL…HGAR.

The protein belongs to the PsbB/PsbC family. PsbB subfamily. PSII is composed of 1 copy each of membrane proteins PsbA, PsbB, PsbC, PsbD, PsbE, PsbF, PsbH, PsbI, PsbJ, PsbK, PsbL, PsbM, PsbT, PsbX, PsbY, PsbZ, Psb30/Ycf12, at least 3 peripheral proteins of the oxygen-evolving complex and a large number of cofactors. It forms dimeric complexes. It depends on Binds multiple chlorophylls. PSII binds additional chlorophylls, carotenoids and specific lipids. as a cofactor.

It localises to the plastid. Its subcellular location is the chloroplast thylakoid membrane. Functionally, one of the components of the core complex of photosystem II (PSII). It binds chlorophyll and helps catalyze the primary light-induced photochemical processes of PSII. PSII is a light-driven water:plastoquinone oxidoreductase, using light energy to abstract electrons from H(2)O, generating O(2) and a proton gradient subsequently used for ATP formation. This Nasturtium officinale (Watercress) protein is Photosystem II CP47 reaction center protein.